The sequence spans 559 residues: DNA ligase (559 aa).

An ATP-binding site is contributed by Glu-247. Catalysis depends on Lys-249, which acts as the N6-AMP-lysine intermediate. ATP is bound by residues Arg-254, Arg-269, Glu-299, Phe-339, Arg-414, and Lys-420.

This sequence belongs to the ATP-dependent DNA ligase family. It depends on Mg(2+) as a cofactor.

The catalysed reaction is ATP + (deoxyribonucleotide)n-3'-hydroxyl + 5'-phospho-(deoxyribonucleotide)m = (deoxyribonucleotide)n+m + AMP + diphosphate.. Its function is as follows. DNA ligase that seals nicks in double-stranded DNA during DNA replication, DNA recombination and DNA repair. This Pyrococcus abyssi (strain GE5 / Orsay) protein is DNA ligase.